We begin with the raw amino-acid sequence, 324 residues long: Beta-ketoacyl-[acyl-carrier-protein] synthase III (324 aa).

Residues cysteine 114 and histidine 251 contribute to the active site. An ACP-binding region spans residues 252–256; that stretch reads QANQR. The active site involves asparagine 281.

Belongs to the thiolase-like superfamily. FabH family. As to quaternary structure, homodimer.

Its subcellular location is the cytoplasm. It carries out the reaction malonyl-[ACP] + acetyl-CoA + H(+) = 3-oxobutanoyl-[ACP] + CO2 + CoA. Its pathway is lipid metabolism; fatty acid biosynthesis. In terms of biological role, catalyzes the condensation reaction of fatty acid synthesis by the addition to an acyl acceptor of two carbons from malonyl-ACP. Catalyzes the first condensation reaction which initiates fatty acid synthesis and may therefore play a role in governing the total rate of fatty acid production. Possesses both acetoacetyl-ACP synthase and acetyl transacylase activities. Its substrate specificity determines the biosynthesis of branched-chain and/or straight-chain of fatty acids. In Rhodospirillum rubrum (strain ATCC 11170 / ATH 1.1.1 / DSM 467 / LMG 4362 / NCIMB 8255 / S1), this protein is Beta-ketoacyl-[acyl-carrier-protein] synthase III.